A 432-amino-acid polypeptide reads, in one-letter code: E3 ubiquitin-protein ligase ATL42 (432 aa).

The N-terminal stretch at 1–18 (MYQIFFFFLPLLHSYASA) is a signal peptide. Residues 37-57 (LAVVTGVLAIMFALTFVLLVY) form a helical membrane-spanning segment. The RING-type; atypical zinc-finger motif lies at 123-165 (CSVCLSKFESVEILRLLPKCRHAFHIGCIDQWLEQHATCPLCR).

It belongs to the RING-type zinc finger family. ATL subfamily.

It is found in the membrane. The enzyme catalyses S-ubiquitinyl-[E2 ubiquitin-conjugating enzyme]-L-cysteine + [acceptor protein]-L-lysine = [E2 ubiquitin-conjugating enzyme]-L-cysteine + N(6)-ubiquitinyl-[acceptor protein]-L-lysine.. It participates in protein modification; protein ubiquitination. Functionally, E3 ubiquitin-protein ligase able to catalyze polyubiquitination with ubiquitin-conjugating enzyme E2 UBC8 in vitro. This chain is E3 ubiquitin-protein ligase ATL42 (ATL42), found in Arabidopsis thaliana (Mouse-ear cress).